A 185-amino-acid chain; its full sequence is Putative manganese efflux pump MntP (185 aa).

The next 6 helical transmembrane spans lie at 6 to 26 (IFIISVALAMDAFTIAVACGL), 41 to 61 (FHFGLFQALMPLLGWLAGLTV), 65 to 85 (VETYAPWISFFLLAFVGGKMI), 107 to 127 (LVFLSVATSLDALAVGLSFSI), 132 to 152 (IAFPCVMIGITALVLTSFGLW), and 164 to 184 (SHIAERIGGVVLILIGLKLLL).

This sequence belongs to the MntP (TC 9.B.29) family.

The protein localises to the cell inner membrane. Functionally, probably functions as a manganese efflux pump. This is Putative manganese efflux pump MntP from Maridesulfovibrio salexigens (strain ATCC 14822 / DSM 2638 / NCIMB 8403 / VKM B-1763) (Desulfovibrio salexigens).